A 116-amino-acid chain; its full sequence is Ly-6/neurotoxin-like protein 1 (116 aa).

Residues 1 to 20 (MTPLLTLILVVLMGLPLAQA) form the signal peptide. The 87-residue stretch at 21-107 (LDCHVCAYNG…TPATLALAPI (87 aa)) folds into the UPAR/Ly6 domain. 5 disulfide bridges follow: C23–C46, C26–C33, C39–C64, C68–C85, and C86–C91. C91 carries GPI-anchor amidated cysteine lipidation. The propeptide at 92 to 116 (NGTGLATPATLALAPILLATLWGLL) is removed in mature form.

In terms of assembly, interacts with nAChRs containing alpha-4:beta-2 (CHRNA4:CHRNB2) and alpha-7 (CHRNA7) subunits. Interacts with CHRNA4 probably in the endoplasmic reticulum prior to nAChR pentameric assembly. Interacts with KCNA2/Potassium voltage-gated channel subfamily A member 2.

It is found in the cell membrane. The protein resides in the cell projection. The protein localises to the dendrite. It localises to the endoplasmic reticulum. Functionally, acts in different tissues through interaction to nicotinic acetylcholine receptors (nAChRs). The proposed role as modulator of nAChR activity seems to be dependent on the nAChR subtype and stoichiometry, and to involve an effect on nAChR trafficking and its cell surface expression, and on single channel properties of the nAChR inserted in the plasma membrane. Modulates functional properties of nicotinic acetylcholine receptors (nAChRs) to prevent excessive excitation, and hence neurodegeneration. Enhances desensitization by increasing both the rate and extent of desensitization of alpha-4:beta-2-containing nAChRs and slowing recovery from desensitization. Promotes large amplitude ACh-evoked currents through alpha-4:beta-2 nAChRs. Is involved in regulation of the nAChR pentameric assembly in the endoplasmic reticulum. Shifts stoichiometry from high sensitivity alpha-4(2):beta-2(3) to low sensitivity alpha-4(3):beta-2(2) nAChR. In vitro modulates alpha-3:beta-4-containing nAChRs. Reduces cell surface expression of (alpha-3:beta-4)(2):beta-4 and (alpha-3:beta-4)(2):alpha-5 nAChRs suggesting an interaction with nAChR alpha-3(-):(+)beta-4 subunit interfaces and an allosteric mode. Corresponding single channel effects characterized by decreased unitary conductance, altered burst proportions and enhanced desensitization/inactivation seem to depend on nAChR alpha:alpha subunit interfaces and are greater in (alpha-3:beta-2)(2):alpha-3 when compared to (alpha-3:beta-2)(2):alpha-5 nAChRs. Prevents plasticity in the primary visual cortex late in life. The protein is Ly-6/neurotoxin-like protein 1 of Homo sapiens (Human).